Consider the following 492-residue polypeptide: Citrate synthase, peroxisomal (492 aa).

Catalysis depends on residues H307, H346, and D402. Residues 469-492 (PAKVRSQDSYSSATTKRYSKVTSH) form a disordered region. Polar residues predominate over residues 475-484 (QDSYSSATTK).

Belongs to the citrate synthase family.

The protein resides in the peroxisome. It carries out the reaction oxaloacetate + acetyl-CoA + H2O = citrate + CoA + H(+). Its pathway is carbohydrate metabolism; tricarboxylic acid cycle; isocitrate from oxaloacetate: step 1/2. Functionally, peroxisomal protein involved in the cellular biosynthesis of citrate, and required primarily for cell growth and modulation of multicellular development. This Dictyostelium discoideum (Social amoeba) protein is Citrate synthase, peroxisomal (cshA).